We begin with the raw amino-acid sequence, 94 residues long: uncharacterized protein (94 aa).

This is an uncharacterized protein from Schizosaccharomyces pombe (strain 972 / ATCC 24843) (Fission yeast).